Reading from the N-terminus, the 414-residue chain is Phosphopentomutase (414 aa).

Residues aspartate 10, aspartate 309, histidine 314, aspartate 350, histidine 351, and histidine 362 each contribute to the Mn(2+) site.

The protein belongs to the phosphopentomutase family. Requires Mn(2+) as cofactor.

It localises to the cytoplasm. The enzyme catalyses 2-deoxy-alpha-D-ribose 1-phosphate = 2-deoxy-D-ribose 5-phosphate. It carries out the reaction alpha-D-ribose 1-phosphate = D-ribose 5-phosphate. The protein operates within carbohydrate degradation; 2-deoxy-D-ribose 1-phosphate degradation; D-glyceraldehyde 3-phosphate and acetaldehyde from 2-deoxy-alpha-D-ribose 1-phosphate: step 1/2. In terms of biological role, isomerase that catalyzes the conversion of deoxy-ribose 1-phosphate (dRib-1-P) and ribose 1-phosphate (Rib-1-P) to deoxy-ribose 5-phosphate (dRib-5-P) and ribose 5-phosphate (Rib-5-P), respectively. The chain is Phosphopentomutase from Hahella chejuensis (strain KCTC 2396).